The chain runs to 436 residues: Trigger factor (436 aa).

Positions 163–248 (GDQVIIDFVG…VHSVQTKVLP (86 aa)) constitute a PPIase FKBP-type domain.

Belongs to the FKBP-type PPIase family. Tig subfamily.

Its subcellular location is the cytoplasm. It catalyses the reaction [protein]-peptidylproline (omega=180) = [protein]-peptidylproline (omega=0). Involved in protein export. Acts as a chaperone by maintaining the newly synthesized protein in an open conformation. Functions as a peptidyl-prolyl cis-trans isomerase. In Hydrogenovibrio crunogenus (strain DSM 25203 / XCL-2) (Thiomicrospira crunogena), this protein is Trigger factor.